We begin with the raw amino-acid sequence, 56 residues long: Male-specific sperm protein Mst87F (56 aa).

Belongs to the MST(3)CGP family. As to expression, testis.

This Drosophila melanogaster (Fruit fly) protein is Male-specific sperm protein Mst87F (Mst87F).